The primary structure comprises 391 residues: MLEPSNLKTTSGSEHRGAMSIQLLLFVDERPSSHEHIEQIQHYLNSLKPDYPYELQIIEIHEQPHLVEHFRLVAAPALVKVFPEPRQTLAGSNIVNQLKKWWPRWQLDLEESQTENTNNRQTEQTKAESLNSVGYSAELMKLSDEIFRLKKEKDELLQQLKFKDQVLAMLAHDLRSPLTAASIAVETLELTQKQEDTERRAQLREQLYHQARKQFRVMNRLITDILQASKTMTAQLSVYYHDLFLPVLCQDILDEYREIFKEKSLTLVKDIPQDIPTVYADEELIRQVIVNLLDNAIKYTPSGGKVTVSILHRTTQKVQVSICDTGPGIPEEKQERIFEGHFRLKRDQEKEGYGLGLSLCRKIIRTHYGQIWVDSVPDQGSCFHFTLPVCR.

One can recognise a Histidine kinase domain in the interval 169 to 391 (MLAHDLRSPL…CFHFTLPVCR (223 aa)). Position 172 is a phosphohistidine; by autocatalysis (His172).

As to quaternary structure, homooligomerizes. Interacts with KaiC. Participates in the KaiABC clock complex, whose core is composed of a KaiC homohexamer, 6 KaiB and up to 6 KaiA dimers. SasA and KaiB(fs) compete to bind to KaiC.

The catalysed reaction is ATP + protein L-histidine = ADP + protein N-phospho-L-histidine.. Functionally, member of the two-component regulatory system SasA/RpaA involved in genome-wide circadian gene expression. One of several clock output pathways. Participates in the Kai clock protein complex, the main circadian regulator in cyanobacteria, via its interaction with KaiC. KaiC enhances the autophosphorylation activity of SasA, which then transfers its phosphate group to RpaA to activate it. In addition to its output function, recruits fold-shifted KaiB (KaiB(fs)) to KaiC to cooperatively form the KaiB(6):KaiC(6) complex (independent of SasA kinase activity). Required for robustness of the circadian rhythm of gene expression and is involved in clock output, also required for adaptation to light/dark cycles. This chain is Adaptive-response sensory kinase SasA, found in Rippkaea orientalis (strain PCC 8801 / RF-1) (Cyanothece sp. (strain PCC 8801)).